Consider the following 160-residue polypeptide: uncharacterized protein (160 aa).

Positions 1-27 are cleaved as a signal peptide; it reads MVIGRKAGIIIYVMHALLLLLLSFTFA.

This is an uncharacterized protein from Aquifex aeolicus (strain VF5).